The chain runs to 335 residues: Biotin synthase (335 aa).

Residues V53–R276 enclose the Radical SAM core domain. The [4Fe-4S] cluster site is built by C66, C70, and C73. Positions 109, 142, 201, and 271 each coordinate [2Fe-2S] cluster.

The protein belongs to the radical SAM superfamily. Biotin synthase family. In terms of assembly, homodimer. [4Fe-4S] cluster is required as a cofactor. It depends on [2Fe-2S] cluster as a cofactor.

The enzyme catalyses (4R,5S)-dethiobiotin + (sulfur carrier)-SH + 2 reduced [2Fe-2S]-[ferredoxin] + 2 S-adenosyl-L-methionine = (sulfur carrier)-H + biotin + 2 5'-deoxyadenosine + 2 L-methionine + 2 oxidized [2Fe-2S]-[ferredoxin]. Its pathway is cofactor biosynthesis; biotin biosynthesis; biotin from 7,8-diaminononanoate: step 2/2. Functionally, catalyzes the conversion of dethiobiotin (DTB) to biotin by the insertion of a sulfur atom into dethiobiotin via a radical-based mechanism. This chain is Biotin synthase, found in Acidothermus cellulolyticus (strain ATCC 43068 / DSM 8971 / 11B).